Here is a 367-residue protein sequence, read N- to C-terminus: Aminomethyltransferase (367 aa).

This sequence belongs to the GcvT family. In terms of assembly, the glycine cleavage system is composed of four proteins: P, T, L and H.

The enzyme catalyses N(6)-[(R)-S(8)-aminomethyldihydrolipoyl]-L-lysyl-[protein] + (6S)-5,6,7,8-tetrahydrofolate = N(6)-[(R)-dihydrolipoyl]-L-lysyl-[protein] + (6R)-5,10-methylene-5,6,7,8-tetrahydrofolate + NH4(+). Functionally, the glycine cleavage system catalyzes the degradation of glycine. This is Aminomethyltransferase from Mycobacterium leprae (strain Br4923).